The primary structure comprises 434 residues: Beta-enolase (434 aa).

Serine 2 is subject to N-acetylserine. Residues histidine 158 and glutamate 167 each coordinate substrate. Glutamate 210 functions as the Proton donor in the catalytic mechanism. Mg(2+)-binding residues include aspartate 245, glutamate 293, and aspartate 318. Positions 293 and 318 each coordinate substrate. Lysine 343 acts as the Proton acceptor in catalysis. Substrate is bound by residues 370–373 (SHRS) and lysine 394.

This sequence belongs to the enolase family. Homodimer. Interacts with PNKD. It depends on Mg(2+) as a cofactor.

The protein resides in the cytoplasm. The catalysed reaction is (2R)-2-phosphoglycerate = phosphoenolpyruvate + H2O. The protein operates within carbohydrate degradation; glycolysis; pyruvate from D-glyceraldehyde 3-phosphate: step 4/5. Its function is as follows. Glycolytic enzyme that catalyzes the conversion of 2-phosphoglycerate to phosphoenolpyruvate. In Gallus gallus (Chicken), this protein is Beta-enolase (ENO3).